We begin with the raw amino-acid sequence, 257 residues long: 5'-nucleotidase SurE (257 aa).

Asp-9, Asp-10, Ser-40, and Asn-92 together coordinate a divalent metal cation.

The protein belongs to the SurE nucleotidase family. It depends on a divalent metal cation as a cofactor.

It is found in the cytoplasm. The enzyme catalyses a ribonucleoside 5'-phosphate + H2O = a ribonucleoside + phosphate. Nucleotidase that shows phosphatase activity on nucleoside 5'-monophosphates. This Alkalilimnicola ehrlichii (strain ATCC BAA-1101 / DSM 17681 / MLHE-1) protein is 5'-nucleotidase SurE.